Reading from the N-terminus, the 600-residue chain is Forkhead box protein O (600 aa).

T49 bears the Phosphothreonine; by PKB/AKT1 mark. S80 bears the Phosphoserine mark. Positions 100–206 form a DNA-binding region, fork-head; the sequence is WGNLSYADLI…ETSRYEKRRG (107 aa). Disordered stretches follow at residues 187–210, 222–283, 319–364, and 580–600; these read KSVR…RAKK, GLND…LEPD, QQGF…TPGY, and LNAR…SWVH. At S195 the chain carries Phosphoserine; by PKB/AKT1. 2 stretches are compositionally biased toward polar residues: residues 226 to 235 and 261 to 270; these read ATPSPSSSVS and RASSNASSCG. S264 carries the phosphoserine; by PKB/AKT1 modification. A phosphoserine mark is found at S267, S268, and S273. The segment covering 330–342 has biased composition (pro residues); sequence TQPPPPPYQPPQP. The segment covering 343 to 354 has biased composition (low complexity); the sequence is QQQQQQGQQPSP.

In terms of assembly, interacts with melt.

The protein localises to the cytoplasm. It is found in the nucleus. In terms of biological role, transcription factor involved in the regulation of the insulin signaling pathway. Consistently activates both the downstream target Thor\d4EBP and the feedback control target InR. Involved in negative regulation of the cell cycle, modulating cell growth and proliferation. In response to cellular stresses, such as nutrient deprivation or increased levels of reactive oxygen species, foxo is activated and inhibits growth through the action of target genes such as Thor. Foxo activated in the adult fat body can regulate lifespan in adults; an insulin peptide itself may function as one secondary messenger of insulin-regulated aging. Also regulates Lip4, homolog of human acid lipases, thereby acting as a key modulator of lipid metabolism by insulin signaling and integrates insulin responses to glucose and lipid homeostasis. In Drosophila ananassae (Fruit fly), this protein is Forkhead box protein O.